The following is a 37-amino-acid chain: Mu-thomitoxin-Hme1a (37 aa).

3 disulfides stabilise this stretch: Cys-2–Cys-18, Cys-9–Cys-22, and Cys-17–Cys-33. Position 37 is a phenylalanine amide (Phe-37).

This sequence belongs to the neurotoxin 01 (U2-agtx) family. Post-translationally, contains 3 disulfide bonds. As to expression, expressed by the venom gland.

The protein resides in the secreted. Blocks the Nav1.2/SCN2A, Nav1.4/SCN4A, and Nav1.6/SCN8A sodium channels. Reduces the peak amplitude of the sodium current and negatively shifts the steady-state inactivation process. Does not shift the threshold potential of activation or the voltage corresponding to maximal current. Does not change the reversal potential of the sodium current. May act on site 1 of the receptor. This chain is Mu-thomitoxin-Hme1a, found in Heriaeus mellotteei (Crab spider).